The following is a 520-amino-acid chain: MAALRLLAWALPRGVSALRPPPALPHRLIRRYVSDRSGSVHFYTDPVKAVEGVKDGSTVMLGGFGLCGIPENLIGALKTKGVKDLKIVSSNVGVDDFGLGILLASKQVRRVVCSYLGENALCEKLYLAGELELEMTPQGTLAERIRAGGTGVPAFYTPTGYGTLVQEGGSPIRYAPDGHLITLSEPREVREFQGRFYLLEHAIRADFALIKGWKADRSGNVIFRGSARNFNVPMCKAADISVVEVEEIVDVGTFAPEDIHVPNIYVDRVIKGPKFEKRIERLTTRDSKPAPGSKDNDPSRTRIIKRAALEFQDGMYANLGIGIPVLASNYISPKMTVYLHSENGILGLGPFPLKNEVDADVINAGKQTVTVVPGGCFFASDDSFAMIRGGHLQLTMLGAMQVSQYGDLANWMVPGKKVKGMGGAMDLVSSKKTRVVVTMEHCTKTKQPKILKKCTMPLTGKRCVDLIITEKAVFEVNHSKGLTLVELWEGSSVDDIKATTACSFAVSPNLKPMQQIKLDA.

The transit peptide at 1–39 (MAALRLLAWALPRGVSALRPPPALPHRLIRRYVSDRSGS) directs the protein to the mitochondrion. Residues 280–299 (ERLTTRDSKPAPGSKDNDPS) are disordered. Glu342 serves as the catalytic 5-glutamyl coenzyme A thioester intermediate.

This sequence belongs to the 3-oxoacid CoA-transferase family. In terms of assembly, homodimer.

Its subcellular location is the mitochondrion. The catalysed reaction is a 3-oxo acid + succinyl-CoA = a 3-oxoacyl-CoA + succinate. Its pathway is ketone metabolism; succinyl-CoA degradation; acetoacetyl-CoA from succinyl-CoA: step 1/1. In terms of biological role, key enzyme for ketone body catabolism. Transfers the CoA moiety from succinate to acetoacetate. Formation of the enzyme-CoA intermediate proceeds via an unstable anhydride species formed between the carboxylate groups of the enzyme and substrate. Probably play and important roles in the energy metabolism of spermatozoa. This is Succinyl-CoA:3-ketoacid coenzyme A transferase 2A, mitochondrial (Oxct2a) from Mus musculus (Mouse).